We begin with the raw amino-acid sequence, 182 residues long: Crossover junction endodeoxyribonuclease RuvC (182 aa).

Residues D7, E69, and D141 contribute to the active site. Mg(2+) contacts are provided by D7, E69, and D141.

This sequence belongs to the RuvC family. In terms of assembly, homodimer which binds Holliday junction (HJ) DNA. The HJ becomes 2-fold symmetrical on binding to RuvC with unstacked arms; it has a different conformation from HJ DNA in complex with RuvA. In the full resolvosome a probable DNA-RuvA(4)-RuvB(12)-RuvC(2) complex forms which resolves the HJ. Requires Mg(2+) as cofactor.

The protein resides in the cytoplasm. The catalysed reaction is Endonucleolytic cleavage at a junction such as a reciprocal single-stranded crossover between two homologous DNA duplexes (Holliday junction).. In terms of biological role, the RuvA-RuvB-RuvC complex processes Holliday junction (HJ) DNA during genetic recombination and DNA repair. Endonuclease that resolves HJ intermediates. Cleaves cruciform DNA by making single-stranded nicks across the HJ at symmetrical positions within the homologous arms, yielding a 5'-phosphate and a 3'-hydroxyl group; requires a central core of homology in the junction. The consensus cleavage sequence is 5'-(A/T)TT(C/G)-3'. Cleavage occurs on the 3'-side of the TT dinucleotide at the point of strand exchange. HJ branch migration catalyzed by RuvA-RuvB allows RuvC to scan DNA until it finds its consensus sequence, where it cleaves and resolves the cruciform DNA. The chain is Crossover junction endodeoxyribonuclease RuvC from Delftia acidovorans (strain DSM 14801 / SPH-1).